Consider the following 449-residue polypeptide: Tubulin alpha-1 chain (449 aa).

GTP contacts are provided by glutamine 11, glutamate 71, serine 140, glycine 144, threonine 145, threonine 179, asparagine 206, and asparagine 228. Residue glutamate 71 coordinates Mg(2+). Glutamate 254 is a catalytic residue.

The protein belongs to the tubulin family. In terms of assembly, dimer of alpha and beta chains. A typical microtubule is a hollow water-filled tube with an outer diameter of 25 nm and an inner diameter of 15 nM. Alpha-beta heterodimers associate head-to-tail to form protofilaments running lengthwise along the microtubule wall with the beta-tubulin subunit facing the microtubule plus end conferring a structural polarity. Microtubules usually have 13 protofilaments but different protofilament numbers can be found in some organisms and specialized cells. The cofactor is Mg(2+).

The protein localises to the cytoplasm. It localises to the cytoskeleton. The enzyme catalyses GTP + H2O = GDP + phosphate + H(+). Tubulin is the major constituent of microtubules, a cylinder consisting of laterally associated linear protofilaments composed of alpha- and beta-tubulin heterodimers. Microtubules grow by the addition of GTP-tubulin dimers to the microtubule end, where a stabilizing cap forms. Below the cap, tubulin dimers are in GDP-bound state, owing to GTPase activity of alpha-tubulin. This Emericella nidulans (strain FGSC A4 / ATCC 38163 / CBS 112.46 / NRRL 194 / M139) (Aspergillus nidulans) protein is Tubulin alpha-1 chain (tubA).